The primary structure comprises 312 residues: PPSVESIGVCYGMSANNLPAASTVVSMFKFNGIKSMRLYAPNQAALQAVGGTGINVVVGAPNDVLSNLAASPAAAASWVKSNIQAYPKVSFRYVCVGNEVAGGATRNLVPAMKNVHGALVAAGLGHIKVTTSVSQAILGVFSPPSAGSFTGEAAAFMGPVVQFLARTNAPLMANIYPYLAWAYNPSAMDMGYALFNASGTVVRDGAYGYQNLFDTTVDAFYTAMGKHGGSSVKLVVSESGWPSGGGTAATPANARFYNQHLINHVGRGTPRHPGAIETYIFAMFNENQKDSGVEQNWGLFYPNMQHVYPINF.

The first 6 residues, P1–S6, serve as a signal peptide directing secretion. The Proton donor role is filled by E99. The N-linked (GlcNAc...) asparagine glycan is linked to N196. Catalysis depends on E238, which acts as the Nucleophile.

Belongs to the glycosyl hydrolase 17 family.

It carries out the reaction Hydrolysis of (1-&gt;4)-beta-D-glucosidic linkages in beta-D-glucans containing (1-&gt;3)- and (1-&gt;4)-bonds.. The protein operates within glycan metabolism; beta-D-glucan degradation. Functions in plant cell wall hydrolysis during mobilization of the endosperm in germinating grain or during the growth of vegetative tissues. This chain is Lichenase-2, found in Hordeum vulgare (Barley).